The following is a 342-amino-acid chain: Farnesyl pyrophosphate synthase 1 (342 aa).

Residues K48, R51, and Q86 each coordinate isopentenyl diphosphate. Residues D93 and D97 each contribute to the Mg(2+) site. A dimethylallyl diphosphate-binding site is contributed by R102. Isopentenyl diphosphate is bound at residue R103. K190, T191, Q229, K246, and K255 together coordinate dimethylallyl diphosphate.

It belongs to the FPP/GGPP synthase family. Mg(2+) serves as cofactor.

It is found in the cytoplasm. The catalysed reaction is isopentenyl diphosphate + dimethylallyl diphosphate = (2E)-geranyl diphosphate + diphosphate. It carries out the reaction isopentenyl diphosphate + (2E)-geranyl diphosphate = (2E,6E)-farnesyl diphosphate + diphosphate. It functions in the pathway isoprenoid biosynthesis; farnesyl diphosphate biosynthesis; farnesyl diphosphate from geranyl diphosphate and isopentenyl diphosphate: step 1/1. It participates in isoprenoid biosynthesis; geranyl diphosphate biosynthesis; geranyl diphosphate from dimethylallyl diphosphate and isopentenyl diphosphate: step 1/1. Catalyzes the sequential condensation of isopentenyl pyrophosphate with the allylic pyrophosphates, dimethylallyl pyrophosphate, and then with the resultant geranylpyrophosphate to the ultimate product farnesyl pyrophosphate. The chain is Farnesyl pyrophosphate synthase 1 (FPS1) from Parthenium argentatum (Guayule rubber plant).